Consider the following 362-residue polypeptide: Solute carrier family 25 member 3 (362 aa).

The N-terminal 49 residues, 1–49, are a transit peptide targeting the mitochondrion; the sequence is MYSSVVHLARANPFNAPHLQLVHDGLAGPRSDPAGPPGPPRRSRNLAAA. Residues 50–63 lie on the Mitochondrial intermembrane side of the membrane; that stretch reads AVEEQYSCDYGSGR. Solcar repeat units lie at residues 63–147, 160–244, and 261–339; these read RFFI…FKVL, WRTS…TVEA, and EQLV…VKVY. Residues 64–86 traverse the membrane as a helical segment; the sequence is FFILCGLGGIISCGTTHTALVPL. Residues 87–121 lie on the Mitochondrial matrix side of the membrane; that stretch reads DLVKCRMQVDPQKYKSIFNGFSVTLKEDGFRGLAK. Lysine 99 is subject to N6-acetyllysine. N6-methyllysine is present on lysine 112. The helical transmembrane segment at 122-141 threads the bilayer; it reads GWAPTFIGYSLQGLCKFGFY. Over 142-161 the chain is Mitochondrial intermembrane; sequence EVFKVLYSNMLGEENAYLWR. A helical membrane pass occupies residues 162 to 183; that stretch reads TSLYLAASASAEFFADIALAPM. The Mitochondrial matrix portion of the chain corresponds to 184 to 218; it reads EAAKVRIQTQPGYANTLRDAAPKMYKEEGLKAFYK. Tyrosine 196 carries the phosphotyrosine modification. Position 209 is an N6-acetyllysine (lysine 209). A helical membrane pass occupies residues 219–238; it reads GVAPLWMRQIPYTMMKFACF. The Mitochondrial intermembrane portion of the chain corresponds to 239 to 261; the sequence is ERTVEALYKFVVPKPRSECSKPE. The chain crosses the membrane as a helical span at residues 262–284; the sequence is QLVVTFVAGYIAGVFCAIVSHPA. At 285 to 314 the chain is on the mitochondrial matrix side; the sequence is DSVVSVLNKEKGSSASEVLKRLGFRGVWKG. A helical transmembrane segment spans residues 315–333; sequence LFARIIMIGTLTALQWFIY. Topologically, residues 334–362 are mitochondrial intermembrane; that stretch reads DSVKVYFRLPRPPPPEMPESLKKKLGYTQ.

This sequence belongs to the mitochondrial carrier (TC 2.A.29) family. As to quaternary structure, interacts with PPIF; the interaction is impaired by CsA. In terms of tissue distribution, expressed in heart, diaphragm and skeletal muscle (at protein level). Not detected in liver, lung, brain, and kidney (at protein level). As to expression, ubiquitous (at protein level).

It localises to the mitochondrion inner membrane. It carries out the reaction phosphate(in) + H(+)(in) = phosphate(out) + H(+)(out). With respect to regulation, up-regulated in the presence of cardiolipin. Functionally, inorganic ion transporter that transports phosphate or copper ions across the mitochondrial inner membrane into the matrix compartment. Mediates proton-coupled symport of phosphate ions necessary for mitochondrial oxidative phosphorylation of ADP to ATP. Transports copper ions probably in the form of anionic copper(I) complexes to maintain mitochondrial matrix copper pool and to supply copper for cytochrome C oxidase complex assembly. May also play a role in regulation of the mitochondrial permeability transition pore (mPTP). This chain is Solute carrier family 25 member 3, found in Bos taurus (Bovine).